Here is a 341-residue protein sequence, read N- to C-terminus: Methionine import ATP-binding protein MetN (341 aa).

The 240-residue stretch at 2-241 (IELNQVVKRY…PQHEVTRRFV (240 aa)) folds into the ABC transporter domain. 38-45 (GFSGAGKS) is a binding site for ATP.

It belongs to the ABC transporter superfamily. Methionine importer (TC 3.A.1.24) family. As to quaternary structure, the complex is composed of two ATP-binding proteins (MetN), two transmembrane proteins (MetI) and a solute-binding protein (MetQ).

Its subcellular location is the cell membrane. It catalyses the reaction L-methionine(out) + ATP + H2O = L-methionine(in) + ADP + phosphate + H(+). The enzyme catalyses D-methionine(out) + ATP + H2O = D-methionine(in) + ADP + phosphate + H(+). Functionally, part of the ABC transporter complex MetNIQ involved in methionine import. Responsible for energy coupling to the transport system. The chain is Methionine import ATP-binding protein MetN from Staphylococcus haemolyticus (strain JCSC1435).